A 723-amino-acid polypeptide reads, in one-letter code: Zinc finger protein 750 (723 aa).

The segment at 25–51 adopts a CCHC-type zinc-finger fold; that stretch reads YKCFQCPFTCNEKSHLFNHMKYGLCKN. Residues C27, C30, H43, and C49 each coordinate Zn(2+). Disordered regions lie at residues 64–91, 132–153, 359–427, 466–630, and 650–723; these read KCPK…SKSV, LHRA…QPAL, ASSP…SQTC, PAQA…SEEQ, and RVGD…ARVS. Polar residues predominate over residues 67–91; that stretch reads KSNSLDPKQTNQPDATAKPASSKSV. Positions 360-369 are enriched in polar residues; the sequence is SSPSRLNPSD. Basic and acidic residues predominate over residues 370-397; that stretch reads PNRKHVEFESPIPEAKDSSKAGQRDTEG. Over residues 470 to 482 the composition is skewed to polar residues; that stretch reads AETTAESPVSLNV. Positions 500-509 are enriched in low complexity; sequence AAPSSPDDSS. Over residues 530–545 the composition is skewed to polar residues; sequence PTYQGSPQAETASFSE. 2 stretches are compositionally biased toward low complexity: residues 563–582 and 606–616; these read APRP…AAVP and GDGAPPTGPGE. Positions 666-678 are enriched in polar residues; it reads DTPTLSSMESQEA.

Expressed in the skin, prostate, lung, placenta and thymus, and at low level in T-cells. Not expressed in peripheral blood leukocytes, pancreas and brain. Clearly expressed in primary keratinocytes but not in fibroblasts.

It is found in the nucleus. Transcription factor involved in epidermis differentiation. Required for terminal epidermal differentiation: acts downstream of p63/TP63 and activates expression of late epidermal differentiation genes. Specifically binds to the promoter of KLF4 and promotes its expression. In Homo sapiens (Human), this protein is Zinc finger protein 750 (ZNF750).